A 101-amino-acid polypeptide reads, in one-letter code: Large ribosomal subunit protein uL24 (101 aa).

This sequence belongs to the universal ribosomal protein uL24 family. As to quaternary structure, part of the 50S ribosomal subunit.

One of two assembly initiator proteins, it binds directly to the 5'-end of the 23S rRNA, where it nucleates assembly of the 50S subunit. In terms of biological role, one of the proteins that surrounds the polypeptide exit tunnel on the outside of the subunit. This Streptococcus pyogenes serotype M1 protein is Large ribosomal subunit protein uL24.